Consider the following 228-residue polypeptide: Prophenin-2 (228 aa).

The N-terminal stretch at 1-29 (METQRASLCLGRWSLWLLLLALVVPSASA) is a signal peptide. Residues 30 to 146 (QALSYREAVL…FLRRPRLRRQ (117 aa)) constitute a propeptide that is removed on maturation. Disulfide bonds link Cys-85–Cys-96 and Cys-107–Cys-124. Repeat copies occupy residues 148–157 (FPPPNVPGPR), 158–167 (FPPPNVPGPR), 168–177 (FPPPNFPGPR), 178–187 (FPPPNFPGPR), 188–197 (FPPPNFPGPP), 198–207 (FPPPIFPGPW), and 208–217 (FPPPPPFRPP). A 7 X 10 AA tandem repeats region spans residues 148–217 (FPPPNVPGPR…FPPPPPFRPP (70 aa)). 2 disordered regions span residues 167–195 (RFPP…NFPG) and 207–228 (WFPP…PGRR). Pro-225 is modified (proline amide). Residues 226-228 (GRR) constitute a propeptide, removed in mature form.

Belongs to the cathelicidin family.

Its subcellular location is the secreted. In terms of biological role, exerts antimicrobial activity. It is more effective against Gram-negative bacteria than Gram-positive bacteria. This is Prophenin-2 from Sus scrofa (Pig).